A 401-amino-acid chain; its full sequence is Multidrug resistance protein MdtH (401 aa).

Topologically, residues 1-12 are cytoplasmic; that stretch reads MSRVSQARNLGK. A helical transmembrane segment spans residues 13–33; sequence YFLLIDNMLVVLGFFVVFPLV. Over 34–98 the chain is Periplasmic; the sequence is SIRFVDQMGW…GFATMGIAHE (65 aa). The helical transmembrane segment at 99–116 threads the bilayer; that stretch reads PWLLWFSCLLSGLGGTLF. Residues 117-137 lie on the Cytoplasmic side of the membrane; that stretch reads DPPRSALVVKLMPQQRGRFFS. A helical membrane pass occupies residues 138–158; that stretch reads LLMMQDSAGAVIGALLGSWLL. Residues 159–163 are Periplasmic-facing; the sequence is QYDFR. A helical membrane pass occupies residues 164–184; that stretch reads LVCATGAVLFVLCAAFNAWLL. The Cytoplasmic portion of the chain corresponds to 185–212; that stretch reads PAWKLSTIRTPVREGMTRVMRDKRFVTY. Residues 213–233 traverse the membrane as a helical segment; the sequence is VLTLAGYYMLAVQVMLMLPIM. The Periplasmic portion of the chain corresponds to 234–242; sequence VNDVAGAPS. Residues 243–263 traverse the membrane as a helical segment; the sequence is AVKWMYAIEACLSLTLLYPIA. Residues 264–275 lie on the Cytoplasmic side of the membrane; that stretch reads RWSEKHFRLEHR. Residues 276–296 traverse the membrane as a helical segment; it reads LMAGLLIMSLSMMPVGMVSGL. Residues 297 to 298 are Periplasmic-facing; it reads QQ. The helical transmembrane segment at 299–319 threads the bilayer; that stretch reads LFTLICLFYIGSIIAEPARET. The Cytoplasmic segment spans residues 320–338; the sequence is LSASLADARARGSYMGFSR. Residues 339-359 form a helical membrane-spanning segment; it reads LGLAIGGTIGYIGGGWLFDLG. At 360 to 366 the chain is on the periplasmic side; sequence KSAHQPE. The chain crosses the membrane as a helical span at residues 367–387; the sequence is LPWMMLGIIGIFTFLALGWQF. At 388–401 the chain is on the cytoplasmic side; that stretch reads SQKRAARRLLERDA.

The protein belongs to the major facilitator superfamily. DHA1 family. MdtH (TC 2.A.1.2.21) subfamily.

It localises to the cell inner membrane. The chain is Multidrug resistance protein MdtH from Shigella dysenteriae serotype 1 (strain Sd197).